The primary structure comprises 249 residues: Adapter protein MecA (249 aa).

This sequence belongs to the MecA family. Homodimer.

Its function is as follows. Enables the recognition and targeting of unfolded and aggregated proteins to the ClpC protease or to other proteins involved in proteolysis. The polypeptide is Adapter protein MecA (Streptococcus thermophilus (strain ATCC BAA-250 / LMG 18311)).